Reading from the N-terminus, the 468-residue chain is Inositol polyphosphate 5-phosphatase K (468 aa).

Residues 34–337 (VHVVTWNVAS…SDHKPVTGTF (304 aa)) are catalytic. Positions 318 to 448 (NYVSHMAYSI…HSVVGISQPF (131 aa)) are required for interaction with GPR78 and PAK1. A required for ruffle localization region spans residues 340-468 (ELNPLMSVPL…DTLYEPEPQI (129 aa)).

This sequence belongs to the inositol 1,4,5-trisphosphate 5-phosphatase type II family. In terms of assembly, interacts with GPR78; necessary for INPP5K localization at the endoplasmic reticulum. Interacts with PAK1; competes with GPR78. As to expression, expressed in the skeletal muscle and the eye.

The protein localises to the endoplasmic reticulum. It localises to the cytoplasm. It catalyses the reaction 1D-myo-inositol 1,4,5-trisphosphate + H2O = 1D-myo-inositol 1,4-bisphosphate + phosphate. The enzyme catalyses 1,2-dioctanoyl-sn-glycero-3-phospho-(1D-myo-inositol-3,4,5-trisphosphate) + H2O = 1,2-dioctanoyl-sn-glycero-3-phospho-(1D-myo-inositol-3,4-bisphosphate) + phosphate. The catalysed reaction is 1D-myo-inositol 1,3,4,5-tetrakisphosphate + H2O = 1D-myo-inositol 1,3,4-trisphosphate + phosphate. It carries out the reaction a 1,2-diacyl-sn-glycero-3-phospho-(1D-myo-inositol-4,5-bisphosphate) + H2O = a 1,2-diacyl-sn-glycero-3-phospho-(1D-myo-inositol 4-phosphate) + phosphate. It catalyses the reaction a 1,2-diacyl-sn-glycero-3-phospho-(1D-myo-inositol-3,4,5-trisphosphate) + H2O = a 1,2-diacyl-sn-glycero-3-phospho-(1D-myo-inositol-3,4-bisphosphate) + phosphate. Inositol 5-phosphatase which acts on inositol 1,4,5-trisphosphate, inositol 1,3,4,5-tetrakisphosphate, phosphatidylinositol 4,5-bisphosphate and phosphatidylinositol 3,4,5-trisphosphate. Has 6-fold higher affinity for phosphatidylinositol 4,5-bisphosphate than for inositol 1,4,5-trisphosphate. Negatively regulates assembly of the actin cytoskeleton. Controls insulin-dependent glucose uptake among inositol 3,4,5-trisphosphate phosphatases; therefore, is the specific regulator for insulin signaling in skeletal muscle. The chain is Inositol polyphosphate 5-phosphatase K from Mus musculus (Mouse).